The sequence spans 418 residues: Putative ion-transport protein YfeO (418 aa).

Helical transmembrane passes span 10–30 (LLLS…LIVV), 54–74 (DSPL…GLVI), 99–119 (ALPG…SLGP), 120–140 (EHPI…RLLP), 149–169 (ILAS…AALI), 186–206 (LFAP…FFHP), 223–243 (ILSG…AVWC), 258–278 (VLVL…GGPV), 300–320 (DYFL…ASGF), 322–342 (GGRI…LHEH), 343–363 (VPAV…VLVV), and 371–391 (LFMA…CIVM).

It belongs to the chloride channel (TC 2.A.49) family.

It is found in the cell membrane. The polypeptide is Putative ion-transport protein YfeO (Escherichia coli O139:H28 (strain E24377A / ETEC)).